Consider the following 466-residue polypeptide: Probable Xaa-Pro aminopeptidase pepP (466 aa).

Mn(2+)-binding residues include D264, D275, E398, and E438.

The protein belongs to the peptidase M24B family. Mn(2+) is required as a cofactor.

The enzyme catalyses Release of any N-terminal amino acid, including proline, that is linked to proline, even from a dipeptide or tripeptide.. In terms of biological role, catalyzes the removal of a penultimate prolyl residue from the N-termini of peptides. The polypeptide is Probable Xaa-Pro aminopeptidase pepP (pepP) (Aspergillus terreus (strain NIH 2624 / FGSC A1156)).